A 358-amino-acid polypeptide reads, in one-letter code: UDP-N-acetylglucosamine--N-acetylmuramyl-(pentapeptide) pyrophosphoryl-undecaprenol N-acetylglucosamine transferase (358 aa).

Residues 11-13 (TGG), asparagine 122, arginine 161, serine 189, isoleucine 243, 262-267 (ALTVCE), and glutamine 288 contribute to the UDP-N-acetyl-alpha-D-glucosamine site.

The protein belongs to the glycosyltransferase 28 family. MurG subfamily.

It is found in the cell inner membrane. The catalysed reaction is di-trans,octa-cis-undecaprenyl diphospho-N-acetyl-alpha-D-muramoyl-L-alanyl-D-glutamyl-meso-2,6-diaminopimeloyl-D-alanyl-D-alanine + UDP-N-acetyl-alpha-D-glucosamine = di-trans,octa-cis-undecaprenyl diphospho-[N-acetyl-alpha-D-glucosaminyl-(1-&gt;4)]-N-acetyl-alpha-D-muramoyl-L-alanyl-D-glutamyl-meso-2,6-diaminopimeloyl-D-alanyl-D-alanine + UDP + H(+). The protein operates within cell wall biogenesis; peptidoglycan biosynthesis. Its function is as follows. Cell wall formation. Catalyzes the transfer of a GlcNAc subunit on undecaprenyl-pyrophosphoryl-MurNAc-pentapeptide (lipid intermediate I) to form undecaprenyl-pyrophosphoryl-MurNAc-(pentapeptide)GlcNAc (lipid intermediate II). This is UDP-N-acetylglucosamine--N-acetylmuramyl-(pentapeptide) pyrophosphoryl-undecaprenol N-acetylglucosamine transferase from Coxiella burnetii (strain Dugway 5J108-111).